The sequence spans 25 residues: Glutamine synthetase 2 isozyme (25 aa).

It belongs to the glutamine synthetase family. Homohexamer.

It localises to the plastid. It is found in the chloroplast. It carries out the reaction L-glutamate + NH4(+) + ATP = L-glutamine + ADP + phosphate + H(+). In terms of biological role, plays a key role in the nitrogen metabolism of microorganisms, animals and plants. The protein is Glutamine synthetase 2 isozyme of Emiliania huxleyi (Coccolithophore).